The following is a 180-amino-acid chain: Large ribosomal subunit protein uL5 (180 aa).

The protein belongs to the universal ribosomal protein uL5 family. As to quaternary structure, part of the 50S ribosomal subunit; part of the 5S rRNA/L5/L18/L25 subcomplex. Contacts the 5S rRNA and the P site tRNA. Forms a bridge to the 30S subunit in the 70S ribosome.

In terms of biological role, this is one of the proteins that bind and probably mediate the attachment of the 5S RNA into the large ribosomal subunit, where it forms part of the central protuberance. In the 70S ribosome it contacts protein S13 of the 30S subunit (bridge B1b), connecting the 2 subunits; this bridge is implicated in subunit movement. Contacts the P site tRNA; the 5S rRNA and some of its associated proteins might help stabilize positioning of ribosome-bound tRNAs. The sequence is that of Large ribosomal subunit protein uL5 from Ligilactobacillus salivarius (strain UCC118) (Lactobacillus salivarius).